The sequence spans 142 residues: uncharacterized protein (142 aa).

This is an uncharacterized protein from Saccharomyces cerevisiae (strain ATCC 204508 / S288c) (Baker's yeast).